We begin with the raw amino-acid sequence, 256 residues long: Phosphonates import ATP-binding protein PhnC (256 aa).

Residues 7 to 251 (IEMKNVTKVY…VFDNIYNGGK (245 aa)) enclose the ABC transporter domain. ATP is bound at residue 40–47 (GLSGAGKS).

This sequence belongs to the ABC transporter superfamily. Phosphonates importer (TC 3.A.1.9.1) family. In terms of assembly, the complex is composed of two ATP-binding proteins (PhnC), two transmembrane proteins (PhnE) and a solute-binding protein (PhnD).

Its subcellular location is the cell membrane. The catalysed reaction is phosphonate(out) + ATP + H2O = phosphonate(in) + ADP + phosphate + H(+). Its function is as follows. Part of the ABC transporter complex PhnCDE involved in phosphonates import. Responsible for energy coupling to the transport system. The chain is Phosphonates import ATP-binding protein PhnC from Lactobacillus delbrueckii subsp. bulgaricus (strain ATCC 11842 / DSM 20081 / BCRC 10696 / JCM 1002 / NBRC 13953 / NCIMB 11778 / NCTC 12712 / WDCM 00102 / Lb 14).